Consider the following 398-residue polypeptide: 1-deoxy-D-xylulose 5-phosphate reductoisomerase (398 aa).

The NADPH site is built by Thr-10, Gly-11, Ser-12, Ile-13, Gly-36, Lys-37, Asn-38, and Asn-124. Lys-125 is a 1-deoxy-D-xylulose 5-phosphate binding site. Glu-126 provides a ligand contact to NADPH. Asp-150 is a Mn(2+) binding site. Ser-151, Glu-152, Ser-186, and His-209 together coordinate 1-deoxy-D-xylulose 5-phosphate. Glu-152 contributes to the Mn(2+) binding site. Residue Gly-215 participates in NADPH binding. Ser-222, Asn-227, Lys-228, and Glu-231 together coordinate 1-deoxy-D-xylulose 5-phosphate. Glu-231 contacts Mn(2+).

It belongs to the DXR family. Homodimer. The cofactor is Mg(2+). Requires Mn(2+) as cofactor.

It carries out the reaction 2-C-methyl-D-erythritol 4-phosphate + NADP(+) = 1-deoxy-D-xylulose 5-phosphate + NADPH + H(+). It functions in the pathway isoprenoid biosynthesis; isopentenyl diphosphate biosynthesis via DXP pathway; isopentenyl diphosphate from 1-deoxy-D-xylulose 5-phosphate: step 1/6. In terms of biological role, catalyzes the NADPH-dependent rearrangement and reduction of 1-deoxy-D-xylulose-5-phosphate (DXP) to 2-C-methyl-D-erythritol 4-phosphate (MEP). In Salmonella paratyphi A (strain ATCC 9150 / SARB42), this protein is 1-deoxy-D-xylulose 5-phosphate reductoisomerase.